Reading from the N-terminus, the 190-residue chain is Recombination protein RecR (190 aa).

A C4-type zinc finger spans residues 58–73 (CEQCGALSENELCEIC). Residues 81 to 167 (NILCIVESPK…TFSKIAQGIP (87 aa)) enclose the Toprim domain.

This sequence belongs to the RecR family.

Its function is as follows. May play a role in DNA repair. It seems to be involved in an RecBC-independent recombinational process of DNA repair. It may act with RecF and RecO. The chain is Recombination protein RecR from Campylobacter jejuni subsp. jejuni serotype O:23/36 (strain 81-176).